Reading from the N-terminus, the 376-residue chain is PqqA peptide cyclase (376 aa).

The region spanning Val7–Ala222 is the Radical SAM core domain. Cys21, Cys25, and Cys28 together coordinate [4Fe-4S] cluster.

This sequence belongs to the radical SAM superfamily. PqqE family. As to quaternary structure, interacts with PqqD. The interaction is necessary for activity of PqqE. The cofactor is [4Fe-4S] cluster.

The enzyme catalyses [PQQ precursor protein] + S-adenosyl-L-methionine = E-Y cross-linked-[PQQ precursor protein] + 5'-deoxyadenosine + L-methionine + H(+). Its pathway is cofactor biosynthesis; pyrroloquinoline quinone biosynthesis. Functionally, catalyzes the cross-linking of a glutamate residue and a tyrosine residue in the PqqA protein as part of the biosynthesis of pyrroloquinoline quinone (PQQ). This chain is PqqA peptide cyclase, found in Pseudomonas putida (strain ATCC 47054 / DSM 6125 / CFBP 8728 / NCIMB 11950 / KT2440).